The primary structure comprises 272 residues: WIMGHMVNDLSLVDEFLNDGANSLELDVEFSSSGTAQRTHHGFPCDCFRYCTNSEKFSTYLDYIRQLTTPGNSKFRSRLILLVMDLKLNPLSSSAAYNAGADVALNLLNHYWQRGESEARAYIVLSLSTIDGAEFISGFKSTMEKEGFADKYYDKIGWDFSGNEDLQQIRDVLENYGIREHIWQGDGITNCLPRGDSRLKEALNLRYSPSYIYADKVYTWSIDEENSIKHALWLGVDGVMTNHPERVIEVLGKSKYSDKFRLATYDDSPWEK.

His5 is a catalytic residue. Mg(2+) contacts are provided by Glu25 and Asp27. Catalysis depends on His41, which acts as the Nucleophile. 2 disulfides stabilise this stretch: Cys45–Cys51 and Cys47–Cys191. A Mg(2+)-binding site is contributed by Asp85.

It belongs to the arthropod phospholipase D family. Class II subfamily. The cofactor is Mg(2+). In terms of tissue distribution, expressed by the venom gland.

It localises to the secreted. It carries out the reaction an N-(acyl)-sphingosylphosphocholine = an N-(acyl)-sphingosyl-1,3-cyclic phosphate + choline. It catalyses the reaction an N-(acyl)-sphingosylphosphoethanolamine = an N-(acyl)-sphingosyl-1,3-cyclic phosphate + ethanolamine. The enzyme catalyses a 1-acyl-sn-glycero-3-phosphocholine = a 1-acyl-sn-glycero-2,3-cyclic phosphate + choline. The catalysed reaction is a 1-acyl-sn-glycero-3-phosphoethanolamine = a 1-acyl-sn-glycero-2,3-cyclic phosphate + ethanolamine. Its function is as follows. Dermonecrotic toxins cleave the phosphodiester linkage between the phosphate and headgroup of certain phospholipids (sphingolipid and lysolipid substrates), forming an alcohol (often choline) and a cyclic phosphate. This toxin acts on sphingomyelin (SM). It may also act on ceramide phosphoethanolamine (CPE), lysophosphatidylcholine (LPC) and lysophosphatidylethanolamine (LPE), but not on lysophosphatidylserine (LPS), and lysophosphatidylglycerol (LPG). It acts by transphosphatidylation, releasing exclusively cyclic phosphate products as second products. Induces dermonecrosis, hemolysis, increased vascular permeability, edema, inflammatory response, and platelet aggregation. This Sicarius peruensis (Six-eyed sand spider) protein is Dermonecrotic toxin SpeSicTox-betaIB2a.